A 634-amino-acid chain; its full sequence is MVNDKILYDSCKTFNIDASSAQSLIESGANPLYEYDGETPLKAYVTKKNNNIKNDVVILLLSSVDYKNINDFDIFEYLCSDNIDIDLLKLLISKGIEINSIKNGINIVEKYATTSNPNVDVFKLLLDKGIPTCSNIQYGYKIKIEQIRRAGEYYNWDDELDDYDYDYTTDYDDRMGKTVLYYYIITRSQDGYATSLDVINYLISHKKEMRYYTYREHTTLYYYLDKCDIKREIFDALFDSNYSGHELMNILSNYLRKQFRKKNHKIDNYIVDQLLFDRDTFYILELCNSLRNNILISTILKRYTVSIQDLLLEYVSYHTVYINVIKCMIDEGATLYRFKHINKYFQKFGNRDPKVVEYILKNGNLVVDNDNDDNLINIMPLFPTFSMRELDVLSILKLCKPYIDDINKIDKHGCSILYHCIKSHSVSLVEWLIDNGADINIITKYGFTCITICVILADKYIPEIAELYIKILEIILSKLPTIECIKKTVDYLDDHRYLFIGGNNKSLLKICIKYFILVDYKYTCSMYPSYIEFITDCEKEIADMRQIKINGTDMLTVMYMLNKPTKKRYVNNPIFTDWANKQYKFYNQIIYNANKLIEQSKKIDDMIEEVSIDDNRLSTLPLEIRHLIFSYAFL.

ANK repeat units follow at residues 36–69 (DGETPLKAYVTKKNNNIKNDVVILLLSSVDYKNI), 70–100 (NDFDIFEYLCSDNIDIDLLKLLISKGIEINS), 103–134 (NGINIVEKYATTSNPNVDVFKLLLDKGIPTCS), 175–211 (MGKTVLYYYIITRSQDGYATSLDVINYLISHKKEMRY), 307–337 (IQDLLLEYVSYHTVYINVIKCMIDEGATLYR), and 412–441 (HGCSILYHCIKSHSVSLVEWLIDNGADINI).

This sequence belongs to the orthopoxvirus OPG025 family. As to quaternary structure, interacts with components of host SCF complex CUL1 and SKP1 and components of the cullin deneddylation/COP9 signalosome complex subunits COPS7A and COPS7B.

Plays a role in the inhibition of host immune repsonse by counteracting the action of interferons on early events in the viral replication cycle. The protein is Ankyrin repeat protein OPG025 (OPG025) of Vaccinia virus (strain Copenhagen) (VACV).